The following is a 144-amino-acid chain: Maximins z/Hv (144 aa).

Residues 1–18 (MNFKYIVAVSFLIASGYA) form the signal peptide. The propeptide occupies 19–43 (RSEENDVQSLSQREVLEEESLREIR). The residue at position 70 (Asn70) is an Asparagine amide. Positions 74 to 123 (TAEDHEVMKRLKAVMRDLDSLDHPEEASERETRGFNQEEIANLFTKKEKR) are excised as a propeptide. Ile143 bears the Isoleucine amide mark.

The protein belongs to the bombinin family. Expressed by the skin glands.

The protein resides in the secreted. Functionally, maximin-z shows antimicrobial activity against bacteria and against the fungus C.albicans. It has little hemolytic activity. Its function is as follows. Maximin-Hv shows antimicrobial activity against bacteria and against the fungus C.albicans. Shows strong hemolytic activity. This Bombina maxima (Giant fire-bellied toad) protein is Maximins z/Hv.